Consider the following 312-residue polypeptide: Ornithine carbamoyltransferase (312 aa).

Carbamoyl phosphate contacts are provided by residues 57 to 60 (STRT), Gln-84, Arg-108, and 135 to 138 (HPCQ). Residues Asn-166, Asp-226, and 230–231 (SM) contribute to the L-ornithine site. Residues 265-266 (CL) and Arg-293 each bind carbamoyl phosphate.

This sequence belongs to the aspartate/ornithine carbamoyltransferase superfamily. OTCase family.

Its subcellular location is the cytoplasm. It catalyses the reaction carbamoyl phosphate + L-ornithine = L-citrulline + phosphate + H(+). It functions in the pathway amino-acid biosynthesis; L-arginine biosynthesis; L-arginine from L-ornithine and carbamoyl phosphate: step 1/3. Its function is as follows. Reversibly catalyzes the transfer of the carbamoyl group from carbamoyl phosphate (CP) to the N(epsilon) atom of ornithine (ORN) to produce L-citrulline. The chain is Ornithine carbamoyltransferase from Brucella ovis (strain ATCC 25840 / 63/290 / NCTC 10512).